The following is a 313-amino-acid chain: UDP-N-acetylglucosamine 3-dehydrogenase (313 aa).

NAD(+)-binding residues include histidine 13, leucine 14, and arginine 38.

The protein belongs to the Gfo/Idh/MocA family. As to quaternary structure, exists in multiple oligomeric states.

It catalyses the reaction UDP-N-acetyl-alpha-D-glucosamine + NAD(+) = UDP-2-acetamido-3-dehydro-2-deoxy-alpha-D-glucopyranose + NADH + H(+). Its pathway is bacterial outer membrane biogenesis; LPS lipid A biosynthesis. In terms of biological role, oxidoreductase involved in the synthesis of 2,3-diamino-2,3-dideoxy-D-glucopyranose (GlcN3N), which is a component of lipid A in some species. Catalyzes the NAD(+)-dependent oxidation of the glucosamine 3-position of UDP-N-acetyl-glucosamine (UDP-GlcNAc) to a ketone moiety, forming UDP-2-acetamido-3-dehydro-2-deoxy-alpha-D-glucopyranose (UDP-3-oxo-GlcNAc). Is specific for UDP-GlcNAc, no activity is observed with UDP-glucose (UDP-Glc), UDP-glucoronic acid (UDP-GlcA), UDP-galactose (UDP-Gal) and UDP-N-acetylgalactosamine (UDP-GalNAc). Cannot use FAD(+) and NADP(+). This Acidithiobacillus ferrooxidans (strain ATCC 23270 / DSM 14882 / CIP 104768 / NCIMB 8455) (Ferrobacillus ferrooxidans (strain ATCC 23270)) protein is UDP-N-acetylglucosamine 3-dehydrogenase.